We begin with the raw amino-acid sequence, 256 residues long: Zinc import ATP-binding protein ZnuC 1 (256 aa).

The region spanning 5–220 is the ABC transporter domain; sequence LTLQDVCVVF…PKYIALFGQQ (216 aa). 37 to 44 serves as a coordination point for ATP; it reads GPNGAGKS. Residues 232–256 are disordered; the sequence is HHHNHDLSGEPSDGSCCSKNKKAHQ.

It belongs to the ABC transporter superfamily. Zinc importer (TC 3.A.1.15.5) family. As to quaternary structure, the complex is composed of two ATP-binding proteins (ZnuC), two transmembrane proteins (ZnuB) and a solute-binding protein (ZnuA).

Its subcellular location is the cell inner membrane. It catalyses the reaction Zn(2+)(out) + ATP(in) + H2O(in) = Zn(2+)(in) + ADP(in) + phosphate(in) + H(+)(in). Part of the ABC transporter complex ZnuABC involved in zinc import. Responsible for energy coupling to the transport system. This Aliivibrio fischeri (strain ATCC 700601 / ES114) (Vibrio fischeri) protein is Zinc import ATP-binding protein ZnuC 1.